The following is a 670-amino-acid chain: UvrABC system protein B (670 aa).

Residues 26 to 414 (EGLEDGLAHQ…GGDVIDQVVR (389 aa)) form the Helicase ATP-binding domain. Residue 39-46 (GVTGSGKT) participates in ATP binding. Positions 92–115 (YYDYYQPEAYVPSSDTFIEKDASV) match the Beta-hairpin motif. In terms of domain architecture, Helicase C-terminal spans 431–597 (QVDDLLSEIR…GINKKISDIL (167 aa)). A UVR domain is found at 630–665 (ELKIRELESKMLTHAQNLEFEEAAALRDEVQVLRAQ).

Belongs to the UvrB family. As to quaternary structure, forms a heterotetramer with UvrA during the search for lesions. Interacts with UvrC in an incision complex.

It is found in the cytoplasm. In terms of biological role, the UvrABC repair system catalyzes the recognition and processing of DNA lesions. A damage recognition complex composed of 2 UvrA and 2 UvrB subunits scans DNA for abnormalities. Upon binding of the UvrA(2)B(2) complex to a putative damaged site, the DNA wraps around one UvrB monomer. DNA wrap is dependent on ATP binding by UvrB and probably causes local melting of the DNA helix, facilitating insertion of UvrB beta-hairpin between the DNA strands. Then UvrB probes one DNA strand for the presence of a lesion. If a lesion is found the UvrA subunits dissociate and the UvrB-DNA preincision complex is formed. This complex is subsequently bound by UvrC and the second UvrB is released. If no lesion is found, the DNA wraps around the other UvrB subunit that will check the other stand for damage. This chain is UvrABC system protein B, found in Pectobacterium atrosepticum (strain SCRI 1043 / ATCC BAA-672) (Erwinia carotovora subsp. atroseptica).